The chain runs to 250 residues: UPF0193 protein EVG1 homolog (250 aa).

Residues 86 to 110 are disordered; the sequence is ESLRNGEPLPLPEPPRPNTNNDPDK.

Belongs to the UPF0193 (EVG1) family.

In Drosophila melanogaster (Fruit fly), this protein is UPF0193 protein EVG1 homolog.